Consider the following 547-residue polypeptide: Chaperonin GroEL 1 (547 aa).

ATP contacts are provided by residues 30-33 (TLGP), Lys51, 87-91 (DGTTT), Gly415, and Asp496.

This sequence belongs to the chaperonin (HSP60) family. Forms a cylinder of 14 subunits composed of two heptameric rings stacked back-to-back. Interacts with the co-chaperonin GroES.

The protein localises to the cytoplasm. It carries out the reaction ATP + H2O + a folded polypeptide = ADP + phosphate + an unfolded polypeptide.. Its function is as follows. Together with its co-chaperonin GroES, plays an essential role in assisting protein folding. The GroEL-GroES system forms a nano-cage that allows encapsulation of the non-native substrate proteins and provides a physical environment optimized to promote and accelerate protein folding. This chain is Chaperonin GroEL 1, found in Rhodopseudomonas palustris (strain BisA53).